We begin with the raw amino-acid sequence, 404 residues long: UPF0674 endoplasmic reticulum membrane protein YNR021W (404 aa).

Serine 2 is subject to N-acetylserine. The N-linked (GlcNAc...) asparagine glycan is linked to asparagine 44. A helical membrane pass occupies residues 49–68 (LCALGVLFLVYAFYKFGNSV). An N-linked (GlcNAc...) asparagine glycan is attached at asparagine 98. Residues 369-404 (AKRRQLKASGQQEKVDQKMKEKRERRLKNKQRTRFQ) form a disordered region. The span at 381-392 (EKVDQKMKEKRE) shows a compositional bias: basic and acidic residues. Basic residues predominate over residues 393–404 (RRLKNKQRTRFQ).

The protein belongs to the UPF0674 family.

It localises to the endoplasmic reticulum membrane. The protein is UPF0674 endoplasmic reticulum membrane protein YNR021W of Saccharomyces cerevisiae (strain ATCC 204508 / S288c) (Baker's yeast).